The following is a 131-amino-acid chain: 23S rRNA-specific endonuclease VapC20 (131 aa).

Positions 2–125 (IFVDTSFWAA…FDGDFSAAGF (124 aa)) constitute a PINc domain. Mg(2+) is bound by residues Asp-5 and Asp-98.

It belongs to the PINc/VapC protein family. Requires Mg(2+) as cofactor.

In terms of biological role, toxic component of a type II toxin-antitoxin (TA) system. An endoribonuclease that cleaves 23S rRNA in the sarcin-ricin loop (SRL). The SRL sequence is highly conserved and is implicated in GTP hydrolysis by EF-Tu and EF-G. Acts on purified ribosomes but not on isolated RNA. Its toxic effect is neutralized by coexpression with cognate antitoxin VapB20. The protein is 23S rRNA-specific endonuclease VapC20 (vapC20) of Mycobacterium tuberculosis (strain CDC 1551 / Oshkosh).